The following is a 563-amino-acid chain: Arginine--tRNA ligase (563 aa).

The short motif at 121-131 (PNIAKPFSIGH) is the 'HIGH' region element.

Belongs to the class-I aminoacyl-tRNA synthetase family. Monomer.

The protein resides in the cytoplasm. It carries out the reaction tRNA(Arg) + L-arginine + ATP = L-arginyl-tRNA(Arg) + AMP + diphosphate. In Streptococcus pyogenes serotype M4 (strain MGAS10750), this protein is Arginine--tRNA ligase.